The primary structure comprises 249 residues: 5'-nucleotidase SurE (249 aa).

A divalent metal cation contacts are provided by Asp-9, Asp-10, Ser-40, and Asn-92.

This sequence belongs to the SurE nucleotidase family. The cofactor is a divalent metal cation.

The protein localises to the cytoplasm. The catalysed reaction is a ribonucleoside 5'-phosphate + H2O = a ribonucleoside + phosphate. Functionally, nucleotidase that shows phosphatase activity on nucleoside 5'-monophosphates. This Shewanella baltica (strain OS223) protein is 5'-nucleotidase SurE.